The sequence spans 417 residues: Tryptophan decarboxylase (417 aa).

The residue at position 263 (Lys263) is an N6-(pyridoxal phosphate)lysine.

The protein belongs to the group II decarboxylase family. Requires pyridoxal 5'-phosphate as cofactor.

Its subcellular location is the cytoplasm. The enzyme catalyses L-tryptophan + H(+) = tryptamine + CO2. With respect to regulation, inhibited by (S)-alpha-fluoromethyltryptophan. Catalyzes the decarboxylation of tryptophan to tryptamine. Tryptamine is a neurotransmitter that induces the release of serotonin, which is suggested to modulate gastrointestinal motility. Therefore, the tryptophan decarboxylase from the gut bacteria Clostridium sporogenes (strain ATCC 15579) may influence host brain and behavior. Has weak activity with tyrosine. Activity against phenylalanine is undetectable. The chain is Tryptophan decarboxylase from Clostridium sporogenes (strain ATCC 15579).